The primary structure comprises 467 residues: ATP synthase subunit beta (467 aa).

152–159 (GGAGVGKT) is an ATP binding site.

This sequence belongs to the ATPase alpha/beta chains family. As to quaternary structure, F-type ATPases have 2 components, CF(1) - the catalytic core - and CF(0) - the membrane proton channel. CF(1) has five subunits: alpha(3), beta(3), gamma(1), delta(1), epsilon(1). CF(0) has three main subunits: a(1), b(2) and c(9-12). The alpha and beta chains form an alternating ring which encloses part of the gamma chain. CF(1) is attached to CF(0) by a central stalk formed by the gamma and epsilon chains, while a peripheral stalk is formed by the delta and b chains.

The protein resides in the cell inner membrane. The enzyme catalyses ATP + H2O + 4 H(+)(in) = ADP + phosphate + 5 H(+)(out). Produces ATP from ADP in the presence of a proton gradient across the membrane. The catalytic sites are hosted primarily by the beta subunits. The protein is ATP synthase subunit beta of Wolinella succinogenes (strain ATCC 29543 / DSM 1740 / CCUG 13145 / JCM 31913 / LMG 7466 / NCTC 11488 / FDC 602W) (Vibrio succinogenes).